Reading from the N-terminus, the 561-residue chain is DNA ligase B (561 aa).

Catalysis depends on lysine 125, which acts as the N6-AMP-lysine intermediate.

The protein belongs to the NAD-dependent DNA ligase family. LigB subfamily.

The enzyme catalyses NAD(+) + (deoxyribonucleotide)n-3'-hydroxyl + 5'-phospho-(deoxyribonucleotide)m = (deoxyribonucleotide)n+m + AMP + beta-nicotinamide D-nucleotide.. In terms of biological role, catalyzes the formation of phosphodiester linkages between 5'-phosphoryl and 3'-hydroxyl groups in double-stranded DNA using NAD as a coenzyme and as the energy source for the reaction. In Salmonella newport (strain SL254), this protein is DNA ligase B.